A 429-amino-acid polypeptide reads, in one-letter code: TNFAIP3-interacting protein 2 (429 aa).

At Ser-7 the chain carries Phosphoserine. Residues 29–117 (QRLRRLQDQL…MQQLLSQPQH (89 aa)) are a coiled coil. Basic and acidic residues predominate over residues 177–195 (HAQRNVGERSPDQSEHTDG). Positions 177-199 (HAQRNVGERSPDQSEHTDGHTSV) are disordered. Coiled-coil stretches lie at residues 196 to 226 (HTSVQSVIEKLQEENRLLKQKVTHVEDLNAK) and 255 to 340 (ELMR…QVSW). The interval 289 to 347 (RDAALERVQMLEQQILAYKDDFMSERADRERAQSRIQELEEKVASLLHQVSWRQDSREP) is ubiquitin-binding domain (UBD). The segment at 372 to 400 (PGGWRPGTGSQQPEPPAEGGHPGAAQRGQ) is disordered. Residues 388 to 397 (AEGGHPGAAQ) are compositionally biased toward low complexity. A CCHC NOA-type zinc finger spans residues 397–429 (QRGQGDLQCPHCLQCFSDEQGEELLRHVAECCQ). Zn(2+) contacts are provided by Cys-405, Cys-408, His-423, and Cys-427.

In terms of assembly, interacts with STK11/LKB1, TNFAIP3, IKBKG, NFKB1, MAP3K8, TEK, RIPK1, CHUK, IKBKB and SMARCD1. Interacts with polyubiquitin. (Microbial infection) Interacts with severe fever with thrombocytopenia syndrome virus (SFTSV) NSs; this interaction promotes TPL2 complex formation and signaling activity leading to IL-10 production. In vitro phosphorylated by CHUK. Post-translationally, ubiquitinated; undergoes 'Lys-48'-linked polyubiquitination probably leading to constitutive proteasomal degradation which can be impaired by IKK-A/CHUK or IKBKB probably involving deubiquitination. Deubiquitinated by USP35; leading to stabilization and inhibition of TNFalpha-induced NF-kappa-B activation. In terms of tissue distribution, ubiquitously expressed in all tissues examined.

It localises to the cytoplasm. It is found in the nucleus. Inhibits NF-kappa-B activation by blocking the interaction of RIPK1 with its downstream effector NEMO/IKBKG. Forms a ternary complex with NFKB1 and MAP3K8 but appears to function upstream of MAP3K8 in the TLR4 signaling pathway that regulates MAP3K8 activation. Involved in activation of the MEK/ERK signaling pathway during innate immune response; this function seems to be stimulus- and cell type specific. Required for stability of MAP3K8. Involved in regulation of apoptosis in endothelial cells; promotes TEK agonist-stimulated endothelial survival. May act as transcriptional coactivator when translocated to the nucleus. Enhances CHUK-mediated NF-kappa-B activation involving NF-kappa-B p50-p65 and p50-c-Rel complexes. The polypeptide is TNFAIP3-interacting protein 2 (Homo sapiens (Human)).